The chain runs to 820 residues: DNA mismatch repair protein MutS (820 aa).

615-622 (GPNMAGKS) serves as a coordination point for ATP.

It belongs to the DNA mismatch repair MutS family.

Its function is as follows. This protein is involved in the repair of mismatches in DNA. It is possible that it carries out the mismatch recognition step. This protein has a weak ATPase activity. This is DNA mismatch repair protein MutS from Anaplasma phagocytophilum (strain HZ).